The sequence spans 195 residues: Imidazoleglycerol-phosphate dehydratase (195 aa).

It belongs to the imidazoleglycerol-phosphate dehydratase family.

The protein resides in the cytoplasm. It catalyses the reaction D-erythro-1-(imidazol-4-yl)glycerol 3-phosphate = 3-(imidazol-4-yl)-2-oxopropyl phosphate + H2O. It functions in the pathway amino-acid biosynthesis; L-histidine biosynthesis; L-histidine from 5-phospho-alpha-D-ribose 1-diphosphate: step 6/9. This is Imidazoleglycerol-phosphate dehydratase from Heliobacterium modesticaldum (strain ATCC 51547 / Ice1).